Consider the following 905-residue polypeptide: Protein translocase subunit SecA (905 aa).

ATP is bound by residues glutamine 87, 105-109 (GEGKT), and aspartate 512. A disordered region spans residues 840-905 (AQRQQEAMAQ…HCHGSKARYA (66 aa)). Residues 843–852 (QQEAMAQAES) are compositionally biased toward low complexity. A compositionally biased stretch (basic and acidic residues) spans 853-862 (ENYRTADHQA). Polar residues predominate over residues 863-874 (EAQQSESLTEEQ). Zn(2+)-binding residues include cysteine 886, cysteine 888, cysteine 897, and histidine 898. Residues 892 to 905 (KKYKHCHGSKARYA) show a composition bias toward basic residues.

This sequence belongs to the SecA family. As to quaternary structure, monomer and homodimer. Part of the essential Sec protein translocation apparatus which comprises SecA, SecYEG and auxiliary proteins SecDF-YajC and YidC. The cofactor is Zn(2+).

Its subcellular location is the cell inner membrane. The protein localises to the cytoplasm. The catalysed reaction is ATP + H2O + cellular proteinSide 1 = ADP + phosphate + cellular proteinSide 2.. In terms of biological role, part of the Sec protein translocase complex. Interacts with the SecYEG preprotein conducting channel. Has a central role in coupling the hydrolysis of ATP to the transfer of proteins into and across the cell membrane, serving both as a receptor for the preprotein-SecB complex and as an ATP-driven molecular motor driving the stepwise translocation of polypeptide chains across the membrane. This chain is Protein translocase subunit SecA, found in Actinobacillus pleuropneumoniae serotype 3 (strain JL03).